The primary structure comprises 239 residues: Small ribosomal subunit protein uS3c (239 aa).

One can recognise a KH type-2 domain in the interval 43-139; sequence IKNYIQKNRK…RLNISIEKVK (97 aa). Positions 50–80 are disordered; the sequence is NRKKGSNRKIESDSSSEVITHNRKTDSGSSS.

It belongs to the universal ribosomal protein uS3 family. Part of the 30S ribosomal subunit.

It localises to the plastid. Its subcellular location is the chloroplast. The protein is Small ribosomal subunit protein uS3c (rps3) of Agrostis stolonifera (Creeping bentgrass).